The sequence spans 329 residues: Phenylalanine--tRNA ligase alpha subunit (329 aa).

A Mg(2+)-binding site is contributed by Glu254.

It belongs to the class-II aminoacyl-tRNA synthetase family. Phe-tRNA synthetase alpha subunit type 1 subfamily. As to quaternary structure, tetramer of two alpha and two beta subunits. Mg(2+) serves as cofactor.

The protein resides in the cytoplasm. The enzyme catalyses tRNA(Phe) + L-phenylalanine + ATP = L-phenylalanyl-tRNA(Phe) + AMP + diphosphate + H(+). The polypeptide is Phenylalanine--tRNA ligase alpha subunit (Haemophilus influenzae (strain PittEE)).